The chain runs to 35 residues: Photosystem II reaction center protein T (35 aa).

Residues 3–23 (ALVYTFLLVSTLGIIFFAIFF) form a helical membrane-spanning segment.

It belongs to the PsbT family. As to quaternary structure, PSII is composed of 1 copy each of membrane proteins PsbA, PsbB, PsbC, PsbD, PsbE, PsbF, PsbH, PsbI, PsbJ, PsbK, PsbL, PsbM, PsbT, PsbY, PsbZ, Psb30/Ycf12, at least 3 peripheral proteins of the oxygen-evolving complex and a large number of cofactors. It forms dimeric complexes.

The protein localises to the plastid. It localises to the chloroplast thylakoid membrane. Its function is as follows. Found at the monomer-monomer interface of the photosystem II (PS II) dimer, plays a role in assembly and dimerization of PSII. PSII is a light-driven water plastoquinone oxidoreductase, using light energy to abstract electrons from H(2)O, generating a proton gradient subsequently used for ATP formation. In Cabomba caroliniana (Carolina fanwort), this protein is Photosystem II reaction center protein T.